The following is a 274-amino-acid chain: NADPH-dependent 7-cyano-7-deazaguanine reductase (274 aa).

80-82 (VES) provides a ligand contact to substrate. 82 to 83 (SK) contacts NADPH. Catalysis depends on Cys-181, which acts as the Thioimide intermediate. The Proton donor role is filled by Asp-188. Residue 220–221 (HE) coordinates substrate. 249 to 250 (RG) is an NADPH binding site.

It belongs to the GTP cyclohydrolase I family. QueF type 2 subfamily. Homodimer.

The protein resides in the cytoplasm. The enzyme catalyses 7-aminomethyl-7-carbaguanine + 2 NADP(+) = 7-cyano-7-deazaguanine + 2 NADPH + 3 H(+). The protein operates within tRNA modification; tRNA-queuosine biosynthesis. Functionally, catalyzes the NADPH-dependent reduction of 7-cyano-7-deazaguanine (preQ0) to 7-aminomethyl-7-deazaguanine (preQ1). In Paraburkholderia phytofirmans (strain DSM 17436 / LMG 22146 / PsJN) (Burkholderia phytofirmans), this protein is NADPH-dependent 7-cyano-7-deazaguanine reductase.